A 503-amino-acid polypeptide reads, in one-letter code: ATP synthase subunit alpha (503 aa).

ATP is bound at residue 169–176 (GDRGTGKT).

Belongs to the ATPase alpha/beta chains family. As to quaternary structure, F-type ATPases have 2 components, CF(1) - the catalytic core - and CF(0) - the membrane proton channel. CF(1) has five subunits: alpha(3), beta(3), gamma(1), delta(1), epsilon(1). CF(0) has three main subunits: a(1), b(2) and c(9-12). The alpha and beta chains form an alternating ring which encloses part of the gamma chain. CF(1) is attached to CF(0) by a central stalk formed by the gamma and epsilon chains, while a peripheral stalk is formed by the delta and b chains.

It localises to the cell inner membrane. It catalyses the reaction ATP + H2O + 4 H(+)(in) = ADP + phosphate + 5 H(+)(out). In terms of biological role, produces ATP from ADP in the presence of a proton gradient across the membrane. The alpha chain is a regulatory subunit. This is ATP synthase subunit alpha from Leptospira borgpetersenii serovar Hardjo-bovis (strain L550).